The following is a 1258-amino-acid chain: Plasma membrane calcium-transporting ATPase 3 (1258 aa).

Residues 1–19 (MGDMANSSIEFHPKPQQQR) show a composition bias toward polar residues. Residues 1–22 (MGDMANSSIEFHPKPQQQREVP) form a disordered region. The Cytoplasmic segment spans residues 1 to 97 (MGDMANSSIE…NFIPPKQPKT (97 aa)). S8 bears the Phosphoserine mark. The helical transmembrane segment at 98–118 (FLQLVWEALQDVTLIILEVAA) threads the bilayer. Over 119–155 (IVSLGLSFYAPPGEESEACGNVSGGAEDEGEAEAGWI) the chain is Extracellular. Residues 156 to 176 (EGAAILLSVICVVLVTAFNDW) form a helical membrane-spanning segment. Residues 177-364 (SKEKQFRGLQ…KEKSVLQGKL (188 aa)) are Cytoplasmic-facing. Disordered regions lie at residues 298-328 (EEEK…GAVA) and 335-354 (KSAE…NVPK). Basic and acidic residues-rich tracts occupy residues 299–308 (EEKKDKKGKQ) and 342–354 (MEER…NVPK). The chain crosses the membrane as a helical span at residues 365–384 (TKLAVQIGKAGLVMSAITVI). At 385–417 (ILVLYFVIETFVVDGRVWLAECTPVYVQYFVKF) the chain is on the extracellular side. The chain crosses the membrane as a helical span at residues 418–435 (FIIGVTVLVVAVPEGLPL). At 436 to 849 (AVTISLAYSV…MWGRNVYDSI (414 aa)) the chain is on the cytoplasmic side. D473 functions as the 4-aspartylphosphate intermediate in the catalytic mechanism. Mg(2+) is bound by residues D794 and D798. A helical transmembrane segment spans residues 850-869 (SKFLQFQLTVNVVAVIVAFT). Topologically, residues 870 to 879 (GACITQDSPL) are extracellular. A helical transmembrane segment spans residues 880 to 900 (KAVQMLWVNLIMDTFASLALA). The Cytoplasmic portion of the chain corresponds to 901 to 920 (TEPPTESLLLRKPYGRDKPL). Residues 921 to 943 (ISRTMMKNILGHAVYQLTIIFTL) traverse the membrane as a helical segment. The Extracellular segment spans residues 944-961 (LFVGELFFDIDSGRNAPL). The helical transmembrane segment at 962–983 (HSPPSEHYTIIFNTFVMMQLFN) threads the bilayer. The Cytoplasmic segment spans residues 984–1002 (EINARKIHGERNVFDGIFS). The helical transmembrane segment at 1003-1024 (NPIFCTIVLGTFGIQIVIVQFG) threads the bilayer. Over 1025–1034 (GKPFSCSPLS) the chain is Extracellular. A helical membrane pass occupies residues 1035–1056 (TEQWLWCLFVGVGELVWGQVIA). Topologically, residues 1057–1258 (TIPTSQLKCL…SPLHSMETSL (202 aa)) are cytoplasmic. Residue T1079 is modified to Phosphothreonine. The segment at 1097–1114 (LRRGQILWFRGLNRIQTQ) is calmodulin-binding subdomain A. T1113 bears the Phosphothreonine; by PKC mark. A calmodulin-binding subdomain B region spans residues 1115–1124 (MEVVSTFKRS). S1126 carries the phosphoserine modification. A disordered region spans residues 1204–1258 (ENEERLRAPPPPPPNQNNNAIDSGIYLTTHATKSATSSAFSSRPGSPLHSMETSL). The span at 1231-1245 (TTHATKSATSSAFSS) shows a compositional bias: low complexity.

Belongs to the cation transport ATPase (P-type) (TC 3.A.3) family. Type IIB subfamily. Interacts with PDZD11. Interacts (via N-terminus) with YWHAE. Expressed predominantly in brain and skeletal muscle. Expressed in the molecular layer of the cerebellar cortex, in particular in granule cells (at protein level). Expressed in aldosterone producing glomerulosa cells of adrenal glands (at protein level). Detected at low levels in various tissues including testis, stomach, small intestine, and large intestine. As to expression, most abundant form in brain and most other tissues. In terms of tissue distribution, most abundant form in skeletal muscle and is also found in brain and at low levels in testis and kidney.

The protein resides in the cell membrane. It localises to the presynaptic cell membrane. The enzyme catalyses Ca(2+)(in) + ATP + H2O = Ca(2+)(out) + ADP + phosphate + H(+). ATP-driven Ca(2+) ion pump involved in the maintenance of basal intracellular Ca(2+) levels at the presynaptic terminals. Uses ATP as an energy source to transport cytosolic Ca(2+) ions across the plasma membrane to the extracellular compartment. May counter-transport protons, but the mechanism and the stoichiometry of this Ca(2+)/H(+) exchange remains to be established. The protein is Plasma membrane calcium-transporting ATPase 3 (Atp2b3) of Rattus norvegicus (Rat).